A 1060-amino-acid polypeptide reads, in one-letter code: Carbamoyl phosphate synthase large chain (1060 aa).

A carboxyphosphate synthetic domain region spans residues 1-401; it reads MPKRTDIKKI…SLLKAVRSLE (401 aa). Positions 129, 169, 175, 176, 208, 210, 215, 241, 242, 243, 284, and 298 each coordinate ATP. The ATP-grasp 1 domain occupies 133-327; sequence KQLMEELEQP…IAKLAAKIAV (195 aa). Mg(2+) is bound by residues Gln284, Glu298, and Asn300. The Mn(2+) site is built by Gln284, Glu298, and Asn300. Positions 402 to 546 are oligomerization domain; the sequence is IGAYHNELAE…YSTYEVENES (145 aa). Residues 547–929 are carbamoyl phosphate synthetic domain; the sequence is NVSKKPSVLV…ALYKAFEASG (383 aa). The ATP-grasp 2 domain occupies 671-861; the sequence is EQALQELAIP…MAQVATKAIL (191 aa). ATP contacts are provided by Arg707, Ser746, Leu748, Glu752, Gly777, Val778, His779, Ser780, Gln820, and Glu832. Mg(2+)-binding residues include Gln820, Glu832, and Asn834. Mn(2+)-binding residues include Gln820, Glu832, and Asn834. In terms of domain architecture, MGS-like spans 930-1060; sequence LHLPSYGAVL…ESRAFTTEAI (131 aa). Residues 930 to 1060 form an allosteric domain region; sequence LHLPSYGAVL…ESRAFTTEAI (131 aa).

This sequence belongs to the CarB family. Composed of two chains; the small (or glutamine) chain promotes the hydrolysis of glutamine to ammonia, which is used by the large (or ammonia) chain to synthesize carbamoyl phosphate. Tetramer of heterodimers (alpha,beta)4. Mg(2+) is required as a cofactor. Requires Mn(2+) as cofactor.

It carries out the reaction hydrogencarbonate + L-glutamine + 2 ATP + H2O = carbamoyl phosphate + L-glutamate + 2 ADP + phosphate + 2 H(+). It catalyses the reaction hydrogencarbonate + NH4(+) + 2 ATP = carbamoyl phosphate + 2 ADP + phosphate + 2 H(+). It participates in amino-acid biosynthesis; L-arginine biosynthesis; carbamoyl phosphate from bicarbonate: step 1/1. It functions in the pathway pyrimidine metabolism; UMP biosynthesis via de novo pathway; (S)-dihydroorotate from bicarbonate: step 1/3. Functionally, large subunit of the glutamine-dependent carbamoyl phosphate synthetase (CPSase). CPSase catalyzes the formation of carbamoyl phosphate from the ammonia moiety of glutamine, carbonate, and phosphate donated by ATP, constituting the first step of 2 biosynthetic pathways, one leading to arginine and/or urea and the other to pyrimidine nucleotides. The large subunit (synthetase) binds the substrates ammonia (free or transferred from glutamine from the small subunit), hydrogencarbonate and ATP and carries out an ATP-coupled ligase reaction, activating hydrogencarbonate by forming carboxy phosphate which reacts with ammonia to form carbamoyl phosphate. In Enterococcus faecalis (strain ATCC 700802 / V583), this protein is Carbamoyl phosphate synthase large chain.